Here is a 340-residue protein sequence, read N- to C-terminus: Delta-aminolevulinic acid dehydratase (340 aa).

The Zn(2+) site is built by Cys-133, Cys-135, and Cys-143. Residue Lys-210 is the Schiff-base intermediate with substrate of the active site. Residues Arg-220 and Arg-232 each contribute to the 5-aminolevulinate site. The active-site Schiff-base intermediate with substrate is the Lys-263. The 5-aminolevulinate site is built by Ser-290 and Tyr-329.

This sequence belongs to the ALAD family. Homooctamer. Requires Zn(2+) as cofactor.

The catalysed reaction is 2 5-aminolevulinate = porphobilinogen + 2 H2O + H(+). It participates in porphyrin-containing compound metabolism; protoporphyrin-IX biosynthesis; coproporphyrinogen-III from 5-aminolevulinate: step 1/4. Its function is as follows. Catalyzes an early step in the biosynthesis of tetrapyrroles. Binds two molecules of 5-aminolevulinate per subunit, each at a distinct site, and catalyzes their condensation to form porphobilinogen. This Candida glabrata (strain ATCC 2001 / BCRC 20586 / JCM 3761 / NBRC 0622 / NRRL Y-65 / CBS 138) (Yeast) protein is Delta-aminolevulinic acid dehydratase (HEM2).